We begin with the raw amino-acid sequence, 484 residues long: Membrane-bound lytic murein transglycosylase F (484 aa).

The N-terminal stretch at 1 to 18 (MKGLLLRIIAAFALVLWA) is a signal peptide. The non-LT domain stretch occupies residues 19–267 (IDMVFPWQQM…RIEEKYFNHF (249 aa)). An LT domain region spans residues 268 to 484 (SQFDYVDMRQ…PLTDNQEKQE (217 aa)). Glu312 is a catalytic residue. The tract at residues 459–484 (ADNKDKPSETDENLPLPLTDNQEKQE) is disordered.

The protein in the N-terminal section; belongs to the bacterial solute-binding protein 3 family. This sequence in the C-terminal section; belongs to the transglycosylase Slt family.

The protein localises to the cell outer membrane. It catalyses the reaction Exolytic cleavage of the (1-&gt;4)-beta-glycosidic linkage between N-acetylmuramic acid (MurNAc) and N-acetylglucosamine (GlcNAc) residues in peptidoglycan, from either the reducing or the non-reducing ends of the peptidoglycan chains, with concomitant formation of a 1,6-anhydrobond in the MurNAc residue.. In terms of biological role, murein-degrading enzyme that degrades murein glycan strands and insoluble, high-molecular weight murein sacculi, with the concomitant formation of a 1,6-anhydromuramoyl product. Lytic transglycosylases (LTs) play an integral role in the metabolism of the peptidoglycan (PG) sacculus. Their lytic action creates space within the PG sacculus to allow for its expansion as well as for the insertion of various structures such as secretion systems and flagella. The sequence is that of Membrane-bound lytic murein transglycosylase F from Mannheimia succiniciproducens (strain KCTC 0769BP / MBEL55E).